A 357-amino-acid chain; its full sequence is sn-glycerol-3-phosphate import ATP-binding protein UgpC (357 aa).

An ABC transporter domain is found at 4 to 235; that stretch reads LKLQAVTKSY…PASLFVASFI (232 aa). 37–44 is a binding site for ATP; sequence GPSGCGKS.

It belongs to the ABC transporter superfamily. sn-glycerol-3-phosphate importer (TC 3.A.1.1.3) family. As to quaternary structure, the complex is composed of two ATP-binding proteins (UgpC), two transmembrane proteins (UgpA and UgpE) and a solute-binding protein (UgpB).

Its subcellular location is the cell inner membrane. The catalysed reaction is sn-glycerol 3-phosphate(out) + ATP + H2O = sn-glycerol 3-phosphate(in) + ADP + phosphate + H(+). In terms of biological role, part of the ABC transporter complex UgpBAEC involved in sn-glycerol-3-phosphate (G3P) import. Responsible for energy coupling to the transport system. This Pectobacterium atrosepticum (strain SCRI 1043 / ATCC BAA-672) (Erwinia carotovora subsp. atroseptica) protein is sn-glycerol-3-phosphate import ATP-binding protein UgpC.